Here is a 426-residue protein sequence, read N- to C-terminus: Histidine--tRNA ligase (426 aa).

It belongs to the class-II aminoacyl-tRNA synthetase family. Homodimer.

It is found in the cytoplasm. The enzyme catalyses tRNA(His) + L-histidine + ATP = L-histidyl-tRNA(His) + AMP + diphosphate + H(+). The chain is Histidine--tRNA ligase from Streptococcus pyogenes serotype M18 (strain MGAS8232).